The following is a 415-amino-acid chain: Probable G-protein coupled receptor 19 (415 aa).

Topologically, residues 1-69 (MVFAHRMDND…LNPGEVATAS (69 aa)) are extracellular. 2 N-linked (GlcNAc...) asparagine glycosylation sites follow: Asn-25 and Asn-52. The helical transmembrane segment at 70 to 90 (IFFGALWLFSIFGNSLVCLVI) threads the bilayer. Residues 91–102 (HRSRRTQSTTNY) lie on the Cytoplasmic side of the membrane. Residues 103 to 123 (FVVSMACADLLISVASTPFVV) traverse the membrane as a helical segment. Over 124–152 (LQFTTGRWTLGSAMCKVVRYFQYLTPGVQ) the chain is Extracellular. Cys-138 and Cys-210 form a disulfide bridge. Residues 153–173 (IYVLLSICIDRFYTIVYPLSF) form a helical membrane-spanning segment. The Cytoplasmic portion of the chain corresponds to 174–182 (KVSREKAKK). A helical membrane pass occupies residues 183 to 203 (MIAASWILDAAFVTPVFFFYG). Residues 204-221 (SNWDSHCNYFLPPSWEGT) are Extracellular-facing. Residues 222 to 242 (AYTVIHFLVGFVIPSILIILF) form a helical membrane-spanning segment. The Cytoplasmic portion of the chain corresponds to 243–277 (YQKVIKYIWRIGTDGRTLRRTMNIVPRTKVKTVKM). The helical transmembrane segment at 278 to 298 (FLLLNLVFLFSWLPFHVAQLW) threads the bilayer. Residues 299–309 (HPHEQDYKKSS) are Extracellular-facing. The chain crosses the membrane as a helical span at residues 310-332 (LVFTAVTWVSFSSSASKPTLYSI). The Cytoplasmic segment spans residues 333-415 (YNANFRRGMK…INSNPPNTFV (83 aa)).

This sequence belongs to the G-protein coupled receptor 1 family. Strongly expressed in the brain.

The protein resides in the cell membrane. G-protein coupled receptor that plays a role in the regulation of circadian rhythms and energy metabolism. Participates in maintaining proper circadian gene expression in the suprachiasmatic nucleus (SCN), the locus of the master circadian clock in the brain. May function as a coordinator of aging-associated metabolic dysfunction, stress response, DNA integrity management, and eventual senescence. Upon binding to adropin, modulates mitochondrial energy metabolism via the p44/42-PDK4 signaling pathway, influencing pyruvate dehydrogenase activity. In Mus musculus (Mouse), this protein is Probable G-protein coupled receptor 19 (Gpr19).